We begin with the raw amino-acid sequence, 371 residues long: Putative agmatine deiminase (371 aa).

The active-site Amidino-cysteine intermediate is Cys361.

It belongs to the agmatine deiminase family.

It carries out the reaction agmatine + H2O = N-carbamoylputrescine + NH4(+). This Selenomonas ruminantium protein is Putative agmatine deiminase.